The following is a 131-amino-acid chain: Ribosome-binding factor A (131 aa).

The protein belongs to the RbfA family. As to quaternary structure, monomer. Binds 30S ribosomal subunits, but not 50S ribosomal subunits or 70S ribosomes.

It localises to the cytoplasm. One of several proteins that assist in the late maturation steps of the functional core of the 30S ribosomal subunit. Associates with free 30S ribosomal subunits (but not with 30S subunits that are part of 70S ribosomes or polysomes). Required for efficient processing of 16S rRNA. May interact with the 5'-terminal helix region of 16S rRNA. The chain is Ribosome-binding factor A from Thermotoga petrophila (strain ATCC BAA-488 / DSM 13995 / JCM 10881 / RKU-1).